A 271-amino-acid chain; its full sequence is Formamidopyrimidine-DNA glycosylase (271 aa).

Pro2 acts as the Schiff-base intermediate with DNA in catalysis. Glu3 acts as the Proton donor in catalysis. Lys58 functions as the Proton donor; for beta-elimination activity in the catalytic mechanism. DNA is bound by residues His92, Arg111, and Arg152. Residues 237–271 (TVYGREGEPCKQCGRVLKHAMIGQRATVWCGSCQR) form an FPG-type zinc finger. Arg261 acts as the Proton donor; for delta-elimination activity in catalysis.

The protein belongs to the FPG family. In terms of assembly, monomer. Zn(2+) is required as a cofactor.

It catalyses the reaction Hydrolysis of DNA containing ring-opened 7-methylguanine residues, releasing 2,6-diamino-4-hydroxy-5-(N-methyl)formamidopyrimidine.. It carries out the reaction 2'-deoxyribonucleotide-(2'-deoxyribose 5'-phosphate)-2'-deoxyribonucleotide-DNA = a 3'-end 2'-deoxyribonucleotide-(2,3-dehydro-2,3-deoxyribose 5'-phosphate)-DNA + a 5'-end 5'-phospho-2'-deoxyribonucleoside-DNA + H(+). Its function is as follows. Involved in base excision repair of DNA damaged by oxidation or by mutagenic agents. Acts as a DNA glycosylase that recognizes and removes damaged bases. Has a preference for oxidized purines, such as 7,8-dihydro-8-oxoguanine (8-oxoG). Has AP (apurinic/apyrimidinic) lyase activity and introduces nicks in the DNA strand. Cleaves the DNA backbone by beta-delta elimination to generate a single-strand break at the site of the removed base with both 3'- and 5'-phosphates. This is Formamidopyrimidine-DNA glycosylase from Xanthomonas oryzae pv. oryzae (strain MAFF 311018).